Consider the following 346-residue polypeptide: Guanine nucleotide-binding protein subunit beta-2 (346 aa).

WD repeat units lie at residues 57-96, 99-138, 147-185, 188-227, 230-269, 274-313, and 316-346; these read GHIN…KVQV, LRSA…ASGV, GYEG…KTMD, GHAG…HKQM, GHEM…QIAL, QKNT…HNGM, and GHEN…RLWL.

Belongs to the WD repeat G protein beta family. In terms of assembly, g proteins are composed of 3 units, alpha, beta and gamma. Interacts with Ggammae/Guanine nucleotide-binding protein subunit gamma-e.

Guanine nucleotide-binding proteins (G proteins) are involved as modulators or transducers in various transmembrane signaling systems. The beta and gamma chains are required for the GTPase activity, for replacement of GDP by GTP, and for G protein-effector interaction. This Calliphora vicina (Blue blowfly) protein is Guanine nucleotide-binding protein subunit beta-2.